The chain runs to 740 residues: NAD(P)H-quinone oxidoreductase subunit 5, chloroplastic (740 aa).

Helical transmembrane passes span 9 to 29, 40 to 60, 89 to 109, 125 to 145, 147 to 167, 185 to 205, 219 to 239, 258 to 278, 286 to 306, 327 to 347, 354 to 374, 396 to 416, 425 to 445, 543 to 563, 602 to 622, and 717 to 737; these read WIIP…LILF, WAFQ…YLSI, IDPL…MVLI, FAYM…SNLI, IYIF…FWFT, GDFG…SFEF, NEVN…GAVS, TPIS…FLVA, VIPY…LLGA, LGYM…FHLI, ALLF…VGYS, ITFL…CFWS, WLYS…TAFY, LFPI…GIPF, VVSV…YKPV, and SYLF…YLLF.

Belongs to the complex I subunit 5 family. As to quaternary structure, NDH is composed of at least 16 different subunits, 5 of which are encoded in the nucleus.

It is found in the plastid. The protein localises to the chloroplast thylakoid membrane. It carries out the reaction a plastoquinone + NADH + (n+1) H(+)(in) = a plastoquinol + NAD(+) + n H(+)(out). It catalyses the reaction a plastoquinone + NADPH + (n+1) H(+)(in) = a plastoquinol + NADP(+) + n H(+)(out). In terms of biological role, NDH shuttles electrons from NAD(P)H:plastoquinone, via FMN and iron-sulfur (Fe-S) centers, to quinones in the photosynthetic chain and possibly in a chloroplast respiratory chain. The immediate electron acceptor for the enzyme in this species is believed to be plastoquinone. Couples the redox reaction to proton translocation, and thus conserves the redox energy in a proton gradient. The polypeptide is NAD(P)H-quinone oxidoreductase subunit 5, chloroplastic (ndhF) (Solanum bulbocastanum (Wild potato)).